We begin with the raw amino-acid sequence, 293 residues long: Pyridoxal 5'-phosphate synthase subunit PdxS (293 aa).

D-ribose 5-phosphate is bound at residue Asp23. Lys80 (schiff-base intermediate with D-ribose 5-phosphate) is an active-site residue. Position 152 (Gly152) interacts with D-ribose 5-phosphate. D-glyceraldehyde 3-phosphate is bound at residue Arg164. D-ribose 5-phosphate contacts are provided by residues Gly213 and 234 to 235; that span reads GS.

This sequence belongs to the PdxS/SNZ family. In terms of assembly, in the presence of PdxT, forms a dodecamer of heterodimers.

It catalyses the reaction aldehydo-D-ribose 5-phosphate + D-glyceraldehyde 3-phosphate + L-glutamine = pyridoxal 5'-phosphate + L-glutamate + phosphate + 3 H2O + H(+). It participates in cofactor biosynthesis; pyridoxal 5'-phosphate biosynthesis. In terms of biological role, catalyzes the formation of pyridoxal 5'-phosphate from ribose 5-phosphate (RBP), glyceraldehyde 3-phosphate (G3P) and ammonia. The ammonia is provided by the PdxT subunit. Can also use ribulose 5-phosphate and dihydroxyacetone phosphate as substrates, resulting from enzyme-catalyzed isomerization of RBP and G3P, respectively. This chain is Pyridoxal 5'-phosphate synthase subunit PdxS, found in Herpetosiphon aurantiacus (strain ATCC 23779 / DSM 785 / 114-95).